A 527-amino-acid polypeptide reads, in one-letter code: Formate--tetrahydrofolate ligase (527 aa).

Residue 53–60 (TSSGEGKT) participates in ATP binding.

It belongs to the formate--tetrahydrofolate ligase family.

It catalyses the reaction (6S)-5,6,7,8-tetrahydrofolate + formate + ATP = (6R)-10-formyltetrahydrofolate + ADP + phosphate. It participates in one-carbon metabolism; tetrahydrofolate interconversion. This Acholeplasma laidlawii (strain PG-8A) protein is Formate--tetrahydrofolate ligase.